Reading from the N-terminus, the 202-residue chain is Endothelin-1 (202 aa).

Residues 1-25 form the signal peptide; the sequence is MDYFPVIFSLLFVTFQGAPETAVLG. A propeptide spanning residues 26–50 is cleaved from the precursor; sequence AELSTGAENGVQSPPPSTPWRPRRS. Intrachain disulfides connect cysteine 53–cysteine 67 and cysteine 55–cysteine 63. The propeptide occupies 74-202; that stretch reads VNTPERVVPY…DQKLTHNRAH (129 aa). Positions 110-124 are endothelin-like; sequence CQCAHQKDKKCWNFC.

Belongs to the endothelin/sarafotoxin family. In terms of tissue distribution, highest expression in the adult is in lung. Lower levels found in heart, kidney, brain and intestine. In the embryo, expressed in outer and inner pharyngeal arch surfaces. Also expressed in endothelium of dorsal aorta and arch arteries, and in epithelium of pharyngeal pouches.

The protein resides in the secreted. Endothelins are endothelium-derived vasoconstrictor peptides. Probable ligand for G-protein coupled receptors EDNRA and EDNRB which activates PTK2B, BCAR1, BCAR3 and, GTPases RAP1 and RHOA cascade in glomerular mesangial cells. Also binds the DEAR/FBXW7-AS1 receptor. Promotes mesenteric arterial wall remodeling via activation of ROCK signaling and subsequent colocalization of NFATC3 with F-actin filaments. NFATC3 then translocates to the nucleus where it subsequently promotes the transcription of the smooth muscle hypertrophy and differentiation marker ACTA2. The sequence is that of Endothelin-1 (Edn1) from Mus musculus (Mouse).